The sequence spans 320 residues: Probable 5-dehydro-4-deoxyglucarate dehydratase (320 aa).

The protein belongs to the DapA family.

The catalysed reaction is 5-dehydro-4-deoxy-D-glucarate + H(+) = 2,5-dioxopentanoate + CO2 + H2O. The protein operates within carbohydrate acid metabolism; D-glucarate degradation; 2,5-dioxopentanoate from D-glucarate: step 2/2. The polypeptide is Probable 5-dehydro-4-deoxyglucarate dehydratase (Streptomyces griseus subsp. griseus (strain JCM 4626 / CBS 651.72 / NBRC 13350 / KCC S-0626 / ISP 5235)).